Consider the following 347-residue polypeptide: MITERQRQILNLIVSLYAKEHTPIGSKSLLDSIQASSATIRNDMKVLEKLGLIQKEHTSSGRVPSVSGYKYFVENVIQLDEFSQNDLFKVMKAFDGDFYRLSDLFKTAAKSLSGLTGLTSFVLNAPQRDQQLVSFEMVMLDSHSVLSVITLGTGEVRTNQFILPKSMTEADLAVFSNLVKERLVGKKVIDIHYTLRTEIPQIVQRYFKVTSEVLQLFESIFDDLFKERLTVAGRKNIFDYATDNLAELYKLFSDDERMLHEIREITNNDEMRAVKFDNDEKYMKNLTIISQKFVIPYRGFGTLTVVGPVEMDYQRTLSVLDLVAKVLTMKLSDYYRYLDGNHYEISK.

It belongs to the HrcA family.

Its function is as follows. Negative regulator of class I heat shock genes (grpE-dnaK-dnaJ and groELS operons). Prevents heat-shock induction of these operons. The sequence is that of Heat-inducible transcription repressor HrcA from Lactococcus lactis subsp. lactis (strain IL1403) (Streptococcus lactis).